Reading from the N-terminus, the 800-residue chain is Nucleolar RNA helicase 2-B (800 aa).

Residues 1–14 (MPGKVYTDEMEGKS) show a composition bias toward basic and acidic residues. The segment at 1-200 (MPGKVYTDEM…TDTSEITAAN (200 aa)) is disordered. Residues 114–124 (ETNISLSSQGG) are compositionally biased toward polar residues. Residues 221-249 (GDFSKFPISKDTIKNLQAKGVTYLFPIQS) carry the Q motif motif. One can recognise a Helicase ATP-binding domain in the interval 252–431 (FHTVYSGKDV…KKYMRKQYEK (180 aa)). An ATP-binding site is contributed by 265–272 (ARTGTGKT). The DEAD box signature appears at 374 to 377 (DEVD). Residues 464–620 (DIVQVYSGSH…SSADAIKSLD (157 aa)) enclose the Helicase C-terminal domain. The tract at residues 750–800 (IQESERSFDGPRNRSFGGRGRRPFDRRNNSRNSSGGGGGRRGRSGGFRRGR) is disordered. Basic and acidic residues predominate over residues 752-761 (ESERSFDGPR). Residues 789-800 (RRGRSGGFRRGR) are compositionally biased toward basic residues.

Belongs to the DEAD box helicase family. DDX21/DDX50 subfamily. Widely expressed. Expressed at higher level in stomach. Expressed at lower level compared to ddx21-a.

Its subcellular location is the nucleus. It localises to the nucleolus. The protein localises to the nucleoplasm. It is found in the cytoplasm. The protein resides in the cytosol. Its subcellular location is the mitochondrion. The catalysed reaction is ATP + H2O = ADP + phosphate + H(+). Its function is as follows. RNA helicase that acts as a sensor of the transcriptional status of both RNA polymerase (Pol) I and II: promotes ribosomal RNA (rRNA) processing and transcription from polymerase II (Pol II). Binds various RNAs, such as rRNAs, snoRNAs, 7SK and, at lower extent, mRNAs. In the nucleolus, localizes to rDNA locus, where it directly binds rRNAs and snoRNAs, and promotes rRNA transcription, processing and modification. Required for rRNA 2'-O-methylation, possibly by promoting the recruitment of late-acting snoRNAs SNORD56 and SNORD58 with pre-ribosomal complexes. In the nucleoplasm, binds 7SK RNA and is recruited to the promoters of Pol II-transcribed genes: acts by facilitating the release of P-TEFb from inhibitory 7SK snRNP in a manner that is dependent on its helicase activity, thereby promoting transcription of its target genes. Required to prevent R-loop-associated DNA damage and transcription-associated genomic instability. The protein is Nucleolar RNA helicase 2-B (ddx21-b) of Xenopus laevis (African clawed frog).